The sequence spans 513 residues: rRNA N(6)-adenosine-methyltransferase ZCCHC4 (513 aa).

Positions 40, 42, 64, 73, 125, 128, 140, and 143 each coordinate Zn(2+). The GRF-type zinc finger occupies 40-82 (CPHGPTLLFVKVTQGKEETRRFYACSACRDRKDCNFFQWEDEK). Residues 172 to 175 (QYLF), arginine 202, aspartate 225, 243 to 244 (NM), and aspartate 276 each bind S-adenosyl-L-methionine. The tract at residues 337–357 (QVDYDNHALYKHGKTGRKQSP) is regulatory loop. 16 residues coordinate Zn(2+): cysteine 380, cysteine 383, histidine 393, cysteine 394, cysteine 397, cysteine 400, histidine 410, cysteine 411, cysteine 414, cysteine 417, histidine 424, cysteine 425, cysteine 428, cysteine 431, histidine 436, and cysteine 438. A DHHC domain is found at 395–447 (ELCNSCTSKDGRKWNHCFLCKKCVKPSWIHCSICNHCAVPDHSCEGPKHGCFI). The segment at 443-460 (HGCFICGELDHKRSTCPN) adopts a CCHC-type zinc-finger fold. Over residues 466–481 (RANKAVRKQKQRKSNK) the composition is skewed to basic residues. The segment at 466–513 (RANKAVRKQKQRKSNKMKMETTKGQSMNHTSATRRKKRRERAHQYLGS) is disordered. The segment covering 487 to 496 (TKGQSMNHTS) has biased composition (polar residues). Basic residues predominate over residues 497–506 (ATRRKKRRER).

It belongs to the ZCCHC4 family. Interacts with components of the ASC-1 complex TRIP4, ASCC1, ASCC2 and ASCC3. Interact with AHCYL1 and AHCYL2. Interact with YTHDC2.

Its subcellular location is the nucleus. It is found in the nucleolus. The protein localises to the cytoplasm. The catalysed reaction is adenosine(4220) in 28S rRNA + S-adenosyl-L-methionine = N(6)-methyladenosine(4220) in 28S rRNA + S-adenosyl-L-homocysteine + H(+). Functionally, rRNA N6-methyltransferase that specifically methylates the adenine in position 4220 of 28S rRNA. N6-methylation of adenine(4220) in 28S rRNA is required for translation. The chain is rRNA N(6)-adenosine-methyltransferase ZCCHC4 from Homo sapiens (Human).